A 51-amino-acid polypeptide reads, in one-letter code: Small integral membrane protein 38 (51 aa).

A helical membrane pass occupies residues 13–33 (PLLALLVVILLARLILWSCLG).

The protein localises to the membrane. In Homo sapiens (Human), this protein is Small integral membrane protein 38.